A 490-amino-acid polypeptide reads, in one-letter code: 5'-3' exonuclease PLD3 (490 aa).

At 1–38 (MKPKLMYQELKVPAEEPANELPMNEIEAWKAAEKKARW) the chain is on the cytoplasmic side. The helical; Signal-anchor for type II membrane protein transmembrane segment at 39 to 59 (VLLVLILAVVGFGALMTQLFL) threads the bilayer. At 60 to 490 (WEYGDLHLFG…DSVGNACRLL (431 aa)) the chain is on the lumenal side. Disulfide bonds link cysteine 77/cysteine 239 and cysteine 81/cysteine 237. Asparagine 97 and asparagine 132 each carry an N-linked (GlcNAc...) asparagine glycan. A PLD phosphodiesterase 1 domain is found at 196 to 223 (THGVLHTKFWVVDQTHFYLGSANMDWRS). Catalysis depends on residues histidine 201, lysine 203, and aspartate 208. The active-site Proton donor is the histidine 201. Phosphate-binding residues include histidine 201 and lysine 203. Residue asparagine 218 coordinates phosphate. Residues asparagine 236, asparagine 284, and asparagine 387 are each glycosylated (N-linked (GlcNAc...) asparagine). Cysteine 366 and cysteine 487 form a disulfide bridge. Residues 411-437 (YARVNHNKYMVTERATYIGTSNWSGNY) enclose the PLD phosphodiesterase 2 domain. A phosphate-binding site is contributed by histidine 416. Residue histidine 416 is the Nucleophile of the active site. Phenylalanine 438 is a binding site for Mg(2+).

It belongs to the phospholipase D family. In terms of assembly, homodimer. Interacts with APP. Post-translationally, N-glycosylated. In terms of processing, proteolytically processed to a soluble active form that is stable within endosomes and lysosomes. During transport through the secretory pathway becomes proteolysed by cysteine proteases, thereby releasing a stable soluble lysosomal lumenal polypeptide, whereas the transmembrane-bound fragment is rapidly degraded. Its transport route to lysosomes involves ubiquitination and the ESCRT complex. Ubiquitinated at N-terminus. Ubiquitination mediates sorting into lysosomes. As to expression, widely expressed. In the brain, high levels of expression are detected in the frontal, temporal and occipital cortices and hippocampus. Expressed at low level in corpus callosum. Expressed in plasmacytoid dendritic cells and monocytes (at protein level).

The protein localises to the endoplasmic reticulum membrane. The protein resides in the lysosome lumen. It localises to the early endosome membrane. It is found in the late endosome membrane. Its subcellular location is the golgi apparatus membrane. The protein localises to the endosome membrane. The enzyme catalyses Exonucleolytic cleavage in the 5'- to 3'-direction to yield nucleoside 3'-phosphates.. It catalyses the reaction a 5'-end 5'-dephospho-ribonucleotidyl-ribonucleotide-RNA + H2O = a ribonucleoside 3'-phosphate + a 5'-end dephospho-ribonucleoside-RNA + H(+). The catalysed reaction is a ribonucleoside 3'-phosphate-2'-3'-cyclophospho-GMP + H2O = a ribonucleoside 3'-phosphate + 2',3'-cyclophospho-GMP + H(+). It carries out the reaction a 5'-end 5'-dephospho-2'-deoxyribonucleotidyl-2'-deoxyribonucleotide in single-stranded DNA + H2O = a 5'-end dephospho-2'-deoxyribonucleoside in single-stranded DNA + a 2'-deoxyribonucleoside 3'-phosphate + H(+). The enzyme catalyses a 5'-end 5'-phospho-2'-deoxyribonucleotide in single-stranded DNA + H2O = a 5'-end 5'-dephospho-2'-deoxyribonucleotide in single-stranded DNA + phosphate. It catalyses the reaction a 3-lyso-sn-glycero-1-phospho-(3'-acyl-1'-sn-glycerol) + a 1-acyl-sn-glycerol = a 3-acyl-sn-glycero-1-phospho-(3'-acyl-1'-sn-glycerol) + glycerol. The catalysed reaction is 3-lyso-sn-glycero-1-phospho-(3'-(9Z-octadecenoyl)-1'-sn-glycerol) + 1-(9Z-octadecenoyl)-sn-glycerol = 3-(9Z-octadecenoyl)-sn-glycero-1-phospho-(3'-(9Z-octadecenoyl)-1'-sn-glycerol) + glycerol. Its activity is regulated as follows. The exonuclease activity toward ssDNA substrate is Ca(2+) and Mg(2+)-independent, but it is inhibited by Fe(2+), Cu(2+) and to a lesser extent Zn(2+) ions. 5'-&gt;3' exonuclease that hydrolyzes the phosphodiester bond of single-stranded DNA (ssDNA) and RNA molecules to form nucleoside 3'-monophosphates and 5'-end 5'-hydroxy deoxyribonucleotide/ribonucleotide fragments. Partially redundant with PLD4, can cleave all four nucleotides displaying higher efficiency for ssDNA and RNA fragments initiated with uridine and guanosine residues and lower efficiency for cytidine-initiated substrates. As a result, it does not always degrade polynucleotides to the single nucleotide level, it can stall at specific sites sparing certain fragments from exonucleolytic degradation. Processes self and pathogenic ssDNA and RNA molecules that reach the endolysosomal compartment via phagocytosis or autophagy and may serve as 'danger' signals for recognition by innate immune receptors such as toll-like receptors (TLRs). Degrades mitochondrial CpG-rich ssDNA fragments to prevent TLR9 activation and autoinflammatory response, but it can cleave viral RNA to generate ligands for TLR7 activation and initiate antiviral immune responses. In plasmacytoid dendritic cells, it cooperates with endonuclease RNASET2 to release 2',3'-cyclic guanosine monophosphate (2',3'-cGMP), a potent stimulatory ligand for TLR7. Produces 2',3'-cGMPs and cytidine-rich RNA fragments that occupy TLR7 ligand-binding pockets and trigger a signaling-competent state. Can exert polynucleotide phosphatase activity toward 5'-phosphorylated ssDNA substrates although at a slow rate. Transphosphatidylase that catalyzes the exchange with R to S stereo-inversion of the glycerol moiety between (S,R)-lysophosphatidylglycerol (LPG) and monoacylglycerol (MAG) substrates to yield (S,S)-bis(monoacylglycero)phosphate (BMP). Can synthesize a variety of (S,S)-BMPs representing the main phospholipid constituent of lysosomal intralumenal vesicle (ILV) membranes that bind acid hydrolases for lipid degradation. Regulates the homeostasis and interorganellar communication of the endolysosomal system with an overall impact on cellular removal of dysfunctional organelles via autophagy as well as proper protein and lipid turnover. May play a role in myotube formation in response to ER stress. The chain is 5'-3' exonuclease PLD3 from Homo sapiens (Human).